The chain runs to 171 residues: SPbeta prophage-derived uncharacterized protein YokC (171 aa).

In Bacillus subtilis (strain 168), this protein is SPbeta prophage-derived uncharacterized protein YokC (yokC).